Consider the following 455-residue polypeptide: Ribosomal protein uS12 methylthiotransferase RimO (455 aa).

One can recognise an MTTase N-terminal domain in the interval 10–126; sequence RKVSMISLGC…ILELIEAHDR (117 aa). Residues C19, C55, C89, C164, C168, and C171 each coordinate [4Fe-4S] cluster. The 231-residue stretch at 150–380 folds into the Radical SAM core domain; the sequence is SSPFYSTYVK…MKAQQRVSFR (231 aa). Residues 383–451 enclose the TRAM domain; the sequence is RALIGRVEPV…EYDLIGEIVD (69 aa).

The protein belongs to the methylthiotransferase family. RimO subfamily. It depends on [4Fe-4S] cluster as a cofactor.

Its subcellular location is the cytoplasm. It catalyses the reaction L-aspartate(89)-[ribosomal protein uS12]-hydrogen + (sulfur carrier)-SH + AH2 + 2 S-adenosyl-L-methionine = 3-methylsulfanyl-L-aspartate(89)-[ribosomal protein uS12]-hydrogen + (sulfur carrier)-H + 5'-deoxyadenosine + L-methionine + A + S-adenosyl-L-homocysteine + 2 H(+). Its function is as follows. Catalyzes the methylthiolation of an aspartic acid residue of ribosomal protein uS12. The protein is Ribosomal protein uS12 methylthiotransferase RimO of Syntrophotalea carbinolica (strain DSM 2380 / NBRC 103641 / GraBd1) (Pelobacter carbinolicus).